We begin with the raw amino-acid sequence, 352 residues long: tRNA pseudouridine synthase D (352 aa).

Residue D81 is the Nucleophile of the active site. A TRUD domain is found at G157–L303.

Belongs to the pseudouridine synthase TruD family.

The catalysed reaction is uridine(13) in tRNA = pseudouridine(13) in tRNA. Its function is as follows. Responsible for synthesis of pseudouridine from uracil-13 in transfer RNAs. The chain is tRNA pseudouridine synthase D from Pseudomonas putida (strain W619).